The primary structure comprises 277 residues: Phosphonates import ATP-binding protein PhnC 2 (277 aa).

In terms of domain architecture, ABC transporter spans 3-251; sequence ISLNGISVQH…LLQALYAQHL (249 aa). ATP is bound at residue 40–47; it reads GPSGAGKT.

It belongs to the ABC transporter superfamily. Phosphonates importer (TC 3.A.1.9.1) family. As to quaternary structure, the complex is composed of two ATP-binding proteins (PhnC), two transmembrane proteins (PhnE) and a solute-binding protein (PhnD).

It localises to the cell inner membrane. It catalyses the reaction phosphonate(out) + ATP + H2O = phosphonate(in) + ADP + phosphate + H(+). Its function is as follows. Part of the ABC transporter complex PhnCDE involved in phosphonates import. Responsible for energy coupling to the transport system. The polypeptide is Phosphonates import ATP-binding protein PhnC 2 (Albidiferax ferrireducens (strain ATCC BAA-621 / DSM 15236 / T118) (Rhodoferax ferrireducens)).